The sequence spans 447 residues: Retinoic acid receptor alpha (447 aa).

Residues 1–79 (MAGKGNPVPG…PPPPPRVYKP (79 aa)) form a modulating region. A compositionally biased stretch (polar residues) spans 47 to 61 (TPSPATIETQSTSSE). Residues 47-72 (TPSPATIETQSTSSEEIVPSPPSPPP) are disordered. NR C4-type zinc fingers lie at residues 80 to 100 (CFVCQDKSSGYHYGVSACEGC) and 116 to 140 (CHREKNCIINKVTRNRCQYCRLQKC). A DNA-binding region (nuclear receptor) is located at residues 80-145 (CFVCQDKSSG…RLQKCLEVGM (66 aa)). The tract at residues 146–174 (SKESVRNDRNKKKKDEKKPECIENYVLSP) is hinge. The 235-residue stretch at 175-409 (DTEQMINRVR…PLIQEMLENS (235 aa)) folds into the NR LBD domain. Residues 400 to 408 (PLIQEMLEN) carry the 9aaTAD motif. The interval 407–447 (ENSEGLESGATGSRPSGAPPGSCSPSLSPSSAQSSPPTQSP) is disordered. A compositionally biased stretch (low complexity) spans 414–447 (SGATGSRPSGAPPGSCSPSLSPSSAQSSPPTQSP).

It belongs to the nuclear hormone receptor family. NR1 subfamily. In terms of assembly, heterodimer; with an rxr molecule. Binds DNA preferentially as a rar/rxr heterodimer.

The protein resides in the nucleus. Functionally, receptor for retinoic acid. Retinoic acid receptors bind as heterodimers to their target response elements in response to their ligands, all-trans or 9-cis retinoic acid, and regulate gene expression in various biological processes. The rar/rxr heterodimers bind to the retinoic acid response elements (RARE) composed of tandem 5'-AGGTCA-3' sites known as DR1-DR5. The sequence is that of Retinoic acid receptor alpha (rara) from Takifugu rubripes (Japanese pufferfish).